A 311-amino-acid polypeptide reads, in one-letter code: tRNA (guanine-N(7)-)-methyltransferase (311 aa).

S-adenosyl-L-methionine is bound by residues E28, E53, and D103. Residue D103 is part of the active site. Substrate is bound by residues K107 and D139.

Belongs to the class I-like SAM-binding methyltransferase superfamily. TrmB family.

The enzyme catalyses guanosine(46) in tRNA + S-adenosyl-L-methionine = N(7)-methylguanosine(46) in tRNA + S-adenosyl-L-homocysteine. The protein operates within tRNA modification; N(7)-methylguanine-tRNA biosynthesis. Catalyzes the formation of N(7)-methylguanine at position 46 (m7G46) in tRNA. This is tRNA (guanine-N(7)-)-methyltransferase from Thermus thermophilus (strain ATCC BAA-163 / DSM 7039 / HB27).